A 116-amino-acid chain; its full sequence is S-adenosylmethionine decarboxylase proenzyme (116 aa).

S62 functions as the Schiff-base intermediate with substrate; via pyruvic acid in the catalytic mechanism. S62 bears the Pyruvic acid (Ser); by autocatalysis mark. The Proton acceptor; for processing activity role is filled by H67. Catalysis depends on C82, which acts as the Proton donor; for catalytic activity.

Belongs to the prokaryotic AdoMetDC family. Type 1 subfamily. Heterotetramer of two alpha and two beta chains arranged as a dimer of alpha/beta heterodimers. Pyruvate is required as a cofactor. Is synthesized initially as an inactive proenzyme. Formation of the active enzyme involves a self-maturation process in which the active site pyruvoyl group is generated from an internal serine residue via an autocatalytic post-translational modification. Two non-identical subunits are generated from the proenzyme in this reaction, and the pyruvate is formed at the N-terminus of the alpha chain, which is derived from the carboxyl end of the proenzyme. The post-translation cleavage follows an unusual pathway, termed non-hydrolytic serinolysis, in which the side chain hydroxyl group of the serine supplies its oxygen atom to form the C-terminus of the beta chain, while the remainder of the serine residue undergoes an oxidative deamination to produce ammonia and the pyruvoyl group blocking the N-terminus of the alpha chain.

It catalyses the reaction S-adenosyl-L-methionine + H(+) = S-adenosyl 3-(methylsulfanyl)propylamine + CO2. Its pathway is amine and polyamine biosynthesis; S-adenosylmethioninamine biosynthesis; S-adenosylmethioninamine from S-adenosyl-L-methionine: step 1/1. Catalyzes the decarboxylation of S-adenosylmethionine to S-adenosylmethioninamine (dcAdoMet), the propylamine donor required for the synthesis of the polyamines spermine and spermidine from the diamine putrescine. This chain is S-adenosylmethionine decarboxylase proenzyme, found in Thermomicrobium roseum (strain ATCC 27502 / DSM 5159 / P-2).